Here is a 450-residue protein sequence, read N- to C-terminus: Signal recognition particle protein (450 aa).

Residues 107–114 (GLQGSGKT), 190–194 (DTAGR), and 248–251 (TKTD) each bind GTP.

Belongs to the GTP-binding SRP family. SRP54 subfamily. In terms of assembly, part of the signal recognition particle protein translocation system, which is composed of SRP and FtsY. SRP is a ribonucleoprotein composed of Ffh and a 4.5S RNA molecule.

It is found in the cytoplasm. It catalyses the reaction GTP + H2O = GDP + phosphate + H(+). Its function is as follows. Involved in targeting and insertion of nascent membrane proteins into the cytoplasmic membrane. Binds to the hydrophobic signal sequence of the ribosome-nascent chain (RNC) as it emerges from the ribosomes. The SRP-RNC complex is then targeted to the cytoplasmic membrane where it interacts with the SRP receptor FtsY. Interaction with FtsY leads to the transfer of the RNC complex to the Sec translocase for insertion into the membrane, the hydrolysis of GTP by both Ffh and FtsY, and the dissociation of the SRP-FtsY complex into the individual components. The sequence is that of Signal recognition particle protein from Buchnera aphidicola subsp. Baizongia pistaciae (strain Bp).